The following is a 119-amino-acid chain: Single-stranded DNA-binding protein (119 aa).

Residues 3 to 102 (INIVTLVGRV…IRVDQLELLG (100 aa)) form the SSB domain.

In terms of assembly, homotetramer.

This chain is Single-stranded DNA-binding protein (ssb1), found in Anabaena variabilis.